Reading from the N-terminus, the 142-residue chain is uncharacterized protein (142 aa).

Asn-29 and Asn-67 each carry an N-linked (GlcNAc...) asparagine; by host glycan. The chain crosses the membrane as a helical span at residues 88 to 108; sequence VFYLGYPVIFIIGVTYFSIIA.

It localises to the membrane. This is an uncharacterized protein from Acanthamoeba polyphaga mimivirus (APMV).